A 302-amino-acid polypeptide reads, in one-letter code: Sulfate adenylyltransferase subunit 2 (302 aa).

It belongs to the PAPS reductase family. CysD subfamily. Heterodimer composed of CysD, the smaller subunit, and CysN.

The catalysed reaction is sulfate + ATP + H(+) = adenosine 5'-phosphosulfate + diphosphate. It functions in the pathway sulfur metabolism; hydrogen sulfide biosynthesis; sulfite from sulfate: step 1/3. Functionally, with CysN forms the ATP sulfurylase (ATPS) that catalyzes the adenylation of sulfate producing adenosine 5'-phosphosulfate (APS) and diphosphate, the first enzymatic step in sulfur assimilation pathway. APS synthesis involves the formation of a high-energy phosphoric-sulfuric acid anhydride bond driven by GTP hydrolysis by CysN coupled to ATP hydrolysis by CysD. This is Sulfate adenylyltransferase subunit 2 from Yersinia enterocolitica serotype O:8 / biotype 1B (strain NCTC 13174 / 8081).